Here is a 50-residue protein sequence, read N- to C-terminus: Bacteriocin BacSp222 (50 aa).

Methionine 1 is subject to N-formylmethionine.

The protein localises to the secreted. Functionally, has bacteriolytic activity against Gram-positive bacteria B.subtilis, L.lactis and M.luteus and several species from genus Staphylococcus including methicillin-resistant S.aureus, with MIC values ranging from 0.11 uM to 7.8 uM. Has no activity against Gram-negative bacteria or fungi. In vitro, has a dose-dependent cytolytic effect on eukaryotic cells. The protein is Bacteriocin BacSp222 of Staphylococcus pseudintermedius.